Reading from the N-terminus, the 103-residue chain is Small ribosomal subunit protein uS14c (103 aa).

Residues 34 to 56 (KVSPLSLSEKTKMREKLQSLPRN) form a disordered region.

This sequence belongs to the universal ribosomal protein uS14 family. In terms of assembly, part of the 30S ribosomal subunit.

The protein localises to the plastid. Its subcellular location is the chloroplast. Its function is as follows. Binds 16S rRNA, required for the assembly of 30S particles. The protein is Small ribosomal subunit protein uS14c of Triticum aestivum (Wheat).